The sequence spans 903 residues: Protein translocase subunit SecA (903 aa).

Residues Gln-87, 105–109, and Asp-507 contribute to the ATP site; that span reads GEGKT. Disordered regions lie at residues 565 to 584 and 855 to 877; these read ESRRIDNQLRGRSGRQGDPG and AEPGSALGDDEDNPLSPEALASQ. The Zn(2+) site is built by Cys-887, Cys-889, Cys-898, and His-899.

It belongs to the SecA family. Monomer and homodimer. Part of the essential Sec protein translocation apparatus which comprises SecA, SecYEG and auxiliary proteins SecDF-YajC and YidC. Requires Zn(2+) as cofactor.

The protein resides in the cell inner membrane. The protein localises to the cytoplasm. The catalysed reaction is ATP + H2O + cellular proteinSide 1 = ADP + phosphate + cellular proteinSide 2.. Part of the Sec protein translocase complex. Interacts with the SecYEG preprotein conducting channel. Has a central role in coupling the hydrolysis of ATP to the transfer of proteins into and across the cell membrane, serving both as a receptor for the preprotein-SecB complex and as an ATP-driven molecular motor driving the stepwise translocation of polypeptide chains across the membrane. This Chromobacterium violaceum (strain ATCC 12472 / DSM 30191 / JCM 1249 / CCUG 213 / NBRC 12614 / NCIMB 9131 / NCTC 9757 / MK) protein is Protein translocase subunit SecA.